Reading from the N-terminus, the 276-residue chain is Large ribosomal subunit protein uL2 (276 aa).

The tract at residues Val224–Lys276 is disordered. Basic residues predominate over residues Lys258–Lys276.

This sequence belongs to the universal ribosomal protein uL2 family. As to quaternary structure, part of the 50S ribosomal subunit. Forms a bridge to the 30S subunit in the 70S ribosome.

Functionally, one of the primary rRNA binding proteins. Required for association of the 30S and 50S subunits to form the 70S ribosome, for tRNA binding and peptide bond formation. It has been suggested to have peptidyltransferase activity; this is somewhat controversial. Makes several contacts with the 16S rRNA in the 70S ribosome. The chain is Large ribosomal subunit protein uL2 from Geobacillus sp. (strain WCH70).